Consider the following 181-residue polypeptide: MNGFSTEEDSRDGPPAQAAPFFGQTCCLIDGGERCPRPAGNASFSKRVQKSISQKKLKLDIDKSVRHLYICDFHKNYIQSVRNKRKRKTSDDGGDSPEHETDVPEVDLFQLQVNTLRRYKRYYKLQTRPGLNKAQLAETVSRHFRNIPVNEKETLAYFIYMVKSNRSRLDQKSESSKQLDA.

Intrachain disulfides connect Cys26–Cys27 and Cys35–Cys71. The Atypical zinc finger occupies 26 to 74 (CCLIDGGERCPRPAGNASFSKRVQKSISQKKLKLDIDKSVRHLYICDFH). Positions 82–103 (RNKRKRKTSDDGGDSPEHETDV) are disordered. The Nuclear localization signal (NLS) signature appears at 83 to 88 (NKRKRK). Residues 85 to 87 (RKR) form an important for DNA and phosphoinositide binding region.

This sequence belongs to the SAP30 family. As to quaternary structure, interacts with components of the histone deacetylase complex sin3a, hdac1 and hdac2. Binds histones and nucleosomes.

The protein resides in the nucleus. It is found in the nucleolus. Its function is as follows. Functions as a transcription repressor, probably via its interaction with histone deacetylase complexes. Involved in the functional recruitment of the class 1 Sin3-histone deacetylase complex (HDAC) to the nucleolus. Binds DNA, apparently without sequence-specificity, and bends bound double-stranded DNA. Binds phosphoinositol phosphates (phosphoinositol 3-phosphate, phosphoinositol 4-phosphate and phosphoinositol 5-phosphate) via the same basic sequence motif that mediates DNA binding and nuclear import. The polypeptide is Histone deacetylase complex subunit SAP30L-B (sap30l-b) (Xenopus laevis (African clawed frog)).